The sequence spans 341 residues: Anthranilate phosphoribosyltransferase (341 aa).

Residues Gly79, Gly82–Asp83, Thr87, Asn89–Thr92, Lys107–Ser115, and Ser119 each bind 5-phospho-alpha-D-ribose 1-diphosphate. Position 79 (Gly79) interacts with anthranilate. Ser91 is a binding site for Mg(2+). Arg165 contacts anthranilate. Mg(2+) contacts are provided by Asp224 and Glu225.

Belongs to the anthranilate phosphoribosyltransferase family. In terms of assembly, homodimer. It depends on Mg(2+) as a cofactor.

The catalysed reaction is N-(5-phospho-beta-D-ribosyl)anthranilate + diphosphate = 5-phospho-alpha-D-ribose 1-diphosphate + anthranilate. It functions in the pathway amino-acid biosynthesis; L-tryptophan biosynthesis; L-tryptophan from chorismate: step 2/5. Functionally, catalyzes the transfer of the phosphoribosyl group of 5-phosphorylribose-1-pyrophosphate (PRPP) to anthranilate to yield N-(5'-phosphoribosyl)-anthranilate (PRA). This Ruminiclostridium cellulolyticum (strain ATCC 35319 / DSM 5812 / JCM 6584 / H10) (Clostridium cellulolyticum) protein is Anthranilate phosphoribosyltransferase.